A 276-amino-acid polypeptide reads, in one-letter code: NAD-capped RNA hydrolase NudC (276 aa).

Arg82 is a substrate binding site. Positions 112 and 115 each coordinate Zn(2+). Residue Glu125 coordinates substrate. Zn(2+)-binding residues include Cys130 and Cys133. Tyr138 lines the substrate pocket. Residues 139–262 (PRISPSMIVL…SIARYLIDLY (124 aa)) form the Nudix hydrolase domain. Ala172, Glu188, and Glu192 together coordinate a divalent metal cation. A Nudix box motif is present at residues 173–194 (GFAEPGESAEECLVREVREEVA). 206-213 (QCWPFPHS) provides a ligand contact to substrate. Residue Glu233 participates in a divalent metal cation binding. Ala255 provides a ligand contact to substrate.

It belongs to the Nudix hydrolase family. NudC subfamily. In terms of assembly, homodimer. It depends on Mg(2+) as a cofactor. Requires Mn(2+) as cofactor. Zn(2+) is required as a cofactor.

The catalysed reaction is a 5'-end NAD(+)-phospho-ribonucleoside in mRNA + H2O = a 5'-end phospho-adenosine-phospho-ribonucleoside in mRNA + beta-nicotinamide D-ribonucleotide + 2 H(+). It carries out the reaction NAD(+) + H2O = beta-nicotinamide D-ribonucleotide + AMP + 2 H(+). It catalyses the reaction NADH + H2O = reduced beta-nicotinamide D-ribonucleotide + AMP + 2 H(+). MRNA decapping enzyme that specifically removes the nicotinamide adenine dinucleotide (NAD) cap from a subset of mRNAs by hydrolyzing the diphosphate linkage to produce nicotinamide mononucleotide (NMN) and 5' monophosphate mRNA. The NAD-cap is present at the 5'-end of some mRNAs and stabilizes RNA against 5'-processing. Has preference for mRNAs with a 5'-end purine. Catalyzes the hydrolysis of a broad range of dinucleotide pyrophosphates. This chain is NAD-capped RNA hydrolase NudC, found in Pseudomonas entomophila (strain L48).